Consider the following 305-residue polypeptide: Thymidylate synthase (305 aa).

Residues Arg-26 and 160–161 contribute to the dUMP site; that span reads RR. The Nucleophile role is filled by Cys-180. Residues 207–210, Asn-218, and 248–250 contribute to the dUMP site; these read RSCD and HLY. (6R)-5,10-methylene-5,6,7,8-tetrahydrofolate is bound at residue Asp-210. Ala-304 contributes to the (6R)-5,10-methylene-5,6,7,8-tetrahydrofolate binding site.

Belongs to the thymidylate synthase family. Bacterial-type ThyA subfamily. As to quaternary structure, homodimer.

It is found in the cytoplasm. It carries out the reaction dUMP + (6R)-5,10-methylene-5,6,7,8-tetrahydrofolate = 7,8-dihydrofolate + dTMP. It participates in pyrimidine metabolism; dTTP biosynthesis. In terms of biological role, catalyzes the reductive methylation of 2'-deoxyuridine-5'-monophosphate (dUMP) to 2'-deoxythymidine-5'-monophosphate (dTMP) while utilizing 5,10-methylenetetrahydrofolate (mTHF) as the methyl donor and reductant in the reaction, yielding dihydrofolate (DHF) as a by-product. This enzymatic reaction provides an intracellular de novo source of dTMP, an essential precursor for DNA biosynthesis. The chain is Thymidylate synthase from Sinorhizobium fredii (strain NBRC 101917 / NGR234).